A 564-amino-acid polypeptide reads, in one-letter code: 2-succinyl-5-enolpyruvyl-6-hydroxy-3-cyclohexene-1-carboxylate synthase (564 aa).

Belongs to the TPP enzyme family. MenD subfamily. Homodimer. It depends on Mg(2+) as a cofactor. Mn(2+) serves as cofactor. Thiamine diphosphate is required as a cofactor.

It carries out the reaction isochorismate + 2-oxoglutarate + H(+) = 5-enolpyruvoyl-6-hydroxy-2-succinyl-cyclohex-3-ene-1-carboxylate + CO2. It functions in the pathway quinol/quinone metabolism; 1,4-dihydroxy-2-naphthoate biosynthesis; 1,4-dihydroxy-2-naphthoate from chorismate: step 2/7. It participates in quinol/quinone metabolism; menaquinone biosynthesis. In terms of biological role, catalyzes the thiamine diphosphate-dependent decarboxylation of 2-oxoglutarate and the subsequent addition of the resulting succinic semialdehyde-thiamine pyrophosphate anion to isochorismate to yield 2-succinyl-5-enolpyruvyl-6-hydroxy-3-cyclohexene-1-carboxylate (SEPHCHC). In Vibrio vulnificus (strain YJ016), this protein is 2-succinyl-5-enolpyruvyl-6-hydroxy-3-cyclohexene-1-carboxylate synthase.